The chain runs to 498 residues: Phosphonates import ATP-binding protein PhnC (498 aa).

The tract at residues 1 to 27 (MPQRPEAARAGPVAGPDAASKPAPGPA) is disordered. Positions 28–269 (LTLRGAGRAY…DLGELYEARR (242 aa)) constitute an ABC transporter domain. 60-67 (GPSGAGKS) is a binding site for ATP. The segment at 270–498 (GAADPARAPA…LEVARAEVPP (229 aa)) is lysR substrate binding domain.

This sequence belongs to the ABC transporter superfamily. Phosphonates importer (TC 3.A.1.9.1) family. The complex is composed of two ATP-binding proteins (PhnC), two transmembrane proteins (PhnE) and a solute-binding protein (PhnD).

It localises to the cell inner membrane. The enzyme catalyses phosphonate(out) + ATP + H2O = phosphonate(in) + ADP + phosphate + H(+). In terms of biological role, part of the ABC transporter complex PhnCDE involved in phosphonates import. Responsible for energy coupling to the transport system. This chain is Phosphonates import ATP-binding protein PhnC, found in Anaeromyxobacter dehalogenans (strain 2CP-C).